We begin with the raw amino-acid sequence, 206 residues long: MARYTGSKNRIARRYGVNIFGRARNPLLHKPNPPGVHGARRRKKSDFGLQLEEKQKLKAIYGMLSEKQLVAYYKKALRLEGNTASHFAEMLECRLDNLVYRLKFGHTIFAAQQLVAHGHILVDGKKVDRRSFQVKPGMVISIKEKSRKIKIIAEALDNPARSVPEYLSSDKEHFSGQLLAKPIPEQMPWPIEISLPVICDFLAHST.

The region spanning 93–156 (CRLDNLVYRL…RKIKIIAEAL (64 aa)) is the S4 RNA-binding domain.

The protein belongs to the universal ribosomal protein uS4 family. Part of the 30S ribosomal subunit. Contacts protein S5. The interaction surface between S4 and S5 is involved in control of translational fidelity.

In terms of biological role, one of the primary rRNA binding proteins, it binds directly to 16S rRNA where it nucleates assembly of the body of the 30S subunit. Its function is as follows. With S5 and S12 plays an important role in translational accuracy. In Protochlamydia amoebophila (strain UWE25), this protein is Small ribosomal subunit protein uS4.